Reading from the N-terminus, the 153-residue chain is Catabolic 3-dehydroquinase (153 aa).

Residue Y24 is the Proton acceptor of the active site. The substrate site is built by N75, H81, and D88. The Proton donor role is filled by H101. Substrate is bound by residues 102–103 and R112; that span reads VS.

The protein belongs to the type-II 3-dehydroquinase family. In terms of assembly, homododecamer. Adopts a ring-like structure, composed of an arrangement of two hexameric rings stacked on top of one another.

The catalysed reaction is 3-dehydroquinate = 3-dehydroshikimate + H2O. The protein operates within aromatic compound metabolism; 3,4-dihydroxybenzoate biosynthesis; 3,4-dihydroxybenzoate from 3-dehydroquinate: step 1/2. In terms of biological role, is involved in the catabolism of quinate. Allows the utilization of quinate as carbon source via the beta-ketoadipate pathway. The protein is Catabolic 3-dehydroquinase of Emericella nidulans (strain FGSC A4 / ATCC 38163 / CBS 112.46 / NRRL 194 / M139) (Aspergillus nidulans).